A 360-amino-acid chain; its full sequence is Chorismate synthase (360 aa).

Residue Arg-47 coordinates NADP(+). FMN contacts are provided by residues 124–126 (RAS), Gly-286, 301–305 (KPTAT), and Arg-327.

This sequence belongs to the chorismate synthase family. In terms of assembly, homotetramer. FMNH2 serves as cofactor.

It carries out the reaction 5-O-(1-carboxyvinyl)-3-phosphoshikimate = chorismate + phosphate. Its pathway is metabolic intermediate biosynthesis; chorismate biosynthesis; chorismate from D-erythrose 4-phosphate and phosphoenolpyruvate: step 7/7. Catalyzes the anti-1,4-elimination of the C-3 phosphate and the C-6 proR hydrogen from 5-enolpyruvylshikimate-3-phosphate (EPSP) to yield chorismate, which is the branch point compound that serves as the starting substrate for the three terminal pathways of aromatic amino acid biosynthesis. This reaction introduces a second double bond into the aromatic ring system. The polypeptide is Chorismate synthase (Synechococcus sp. (strain RCC307)).